We begin with the raw amino-acid sequence, 305 residues long: tRNA uridine(34) hydroxylase (305 aa).

The region spanning alanine 125 to serine 219 is the Rhodanese domain. Cysteine 179 functions as the Cysteine persulfide intermediate in the catalytic mechanism.

It belongs to the TrhO family.

It catalyses the reaction uridine(34) in tRNA + AH2 + O2 = 5-hydroxyuridine(34) in tRNA + A + H2O. Its function is as follows. Catalyzes oxygen-dependent 5-hydroxyuridine (ho5U) modification at position 34 in tRNAs. The polypeptide is tRNA uridine(34) hydroxylase (Brucella ovis (strain ATCC 25840 / 63/290 / NCTC 10512)).